The sequence spans 228 residues: Cytidylate kinase (228 aa).

Residue Gly-17–Thr-25 coordinates ATP.

Belongs to the cytidylate kinase family. Type 1 subfamily.

Its subcellular location is the cytoplasm. The enzyme catalyses CMP + ATP = CDP + ADP. It carries out the reaction dCMP + ATP = dCDP + ADP. This chain is Cytidylate kinase, found in Burkholderia multivorans (strain ATCC 17616 / 249).